Here is a 161-residue protein sequence, read N- to C-terminus: Interleukin-17F (161 aa).

A signal peptide spans 1–28 (MKGSCETTMVKSLLLLMLGFAIISSGAA). Residue Asn-83 is glycosylated (N-linked (GlcNAc...) asparagine). Disulfide bonds link Cys-100–Cys-150 and Cys-105–Cys-152.

This sequence belongs to the IL-17 family. In terms of assembly, homodimer; disulfide-linked. Heterodimer with IL17A (IL17A-IL17F). Forms complexes with IL17RA and IL17RC receptors with 2:1 binding stoichiometry: two receptor chains for one interleukin molecule. IL17F homodimer forms predominantly complexes with IL17RC homodimer, whereas IL17A-IL17F favors complexes with IL17RA-IL17RC. IL17RA and IL17RC chains cannot distinguish between IL17A and IL17F molecules, potentially enabling the formation of topologically distinct complexes.

Its subcellular location is the secreted. In terms of biological role, effector cytokine of innate and adaptive immune system involved in antimicrobial host defense and maintenance of tissue integrity. IL17A-IL17F signals via IL17RA-IL17RC heterodimeric receptor complex, triggering homotypic interaction of IL17RA and IL17RC chains with TRAF3IP2 adapter through SEFIR domains. This leads to downstream TRAF6-mediated activation of NF-kappa-B and MAPkinase pathways ultimately resulting in transcriptional activation of cytokines, chemokines, antimicrobial peptides and matrix metalloproteinases, with potential strong immune inflammation. IL17A-IL17F is primarily involved in host defense against extracellular bacteria and fungi by inducing neutrophilic inflammation. As signature effector cytokine of T-helper 17 cells (Th17), primarily induces neutrophil activation and recruitment at infection and inflammatory sites. Stimulates the production of antimicrobial beta-defensins DEFB1, DEFB103A, and DEFB104A by mucosal epithelial cells, limiting the entry of microbes through the epithelial barriers. IL17F homodimer can signal via IL17RC homodimeric receptor complex, triggering downstream activation of TRAF6 and NF-kappa-B signaling pathway. Via IL17RC induces transcriptional activation of IL33, a potent cytokine that stimulates group 2 innate lymphoid cells and adaptive T-helper 2 cells involved in pulmonary allergic response to fungi. Likely via IL17RC, promotes sympathetic innervation of peripheral organs by coordinating the communication between gamma-delta T cells and parenchymal cells. Stimulates sympathetic innervation of thermogenic adipose tissue by driving TGFB1 expression. Regulates the composition of intestinal microbiota and immune tolerance by inducing antimicrobial proteins that specifically control the growth of commensal Firmicutes and Bacteroidetes. The protein is Interleukin-17F (Il17f) of Rattus norvegicus (Rat).